The chain runs to 645 residues: Transcription termination factor FttA (645 aa).

The interval 10-77 (APSNQNIMAT…IIVRIDESVR (68 aa)) is KHa. The segment at 78 to 146 (KKEEDARKML…WTLRIRKATT (69 aa)) is KHb. The metallo-beta-lactamase N-terminus stretch occupies residues 187–391 (EISLTALGGF…LLIESTYGAK (205 aa)). The Zn(2+) site is built by His-250, His-252, Asp-254, His-255, His-337, and Asp-360. Residues 392-586 (EDIQPTRQEV…CRMEKLDGFS (195 aa)) are beta-Casp. Positions 587–645 (GHSDYNQLTGFVQKLRPKLRRVLVNHGERRKSENLALAVRRMFRIPAHYPQIQESIKLF) are metallo-beta-lactamase C-terminus. His-612 is a Zn(2+) binding site.

Belongs to the metallo-beta-lactamase superfamily. RNA-metabolizing metallo-beta-lactamase-like family. FttA subfamily. Homodimer. Interacts with RNA polymerase (RNAP), interacts with the Spt4-Spt5 complex. Requires Zn(2+) as cofactor.

Its function is as follows. Terminates transcription on the whole genome. Termination is linked to FttA-mediated RNA cleavage and does not require NTP hydrolysis. Cleaves endonucleolytically at the RNA exit channel of RNA polymerase (RNAP); the 5'-3' exonuclease activity of this protein degrades the nascent RNA released from RNAP. Terminates transcription genome-wide in M.maripaludis. Restores wild-type growth to a strain of Methanococcus maripaludis depleted for this gene at 22 degrees Celsius and prevents transcriptional read-through. Transcription termination is most effective in vivo on RNAs with more than one U4-tract in their 3'-ends. Has endonuclease activity after U-rich tracts in transcription termination sequences. In Cenarchaeum symbiosum (strain A), this protein is Transcription termination factor FttA.